The primary structure comprises 333 residues: Acetoin:2,6-dichlorophenolindophenol oxidoreductase subunit alpha (333 aa).

Tetramer of 2 alpha and 2 beta subunits. Thiamine diphosphate serves as cofactor.

It functions in the pathway ketone degradation; acetoin degradation. In terms of biological role, catalyzes the 2,6-dichlorophenolindophenol-dependent cleavage of acetoin into acetate and acetaldehyde. The alpha subunit is probably the catalytic subunit of the enzyme. This is Acetoin:2,6-dichlorophenolindophenol oxidoreductase subunit alpha (acoA) from Bacillus subtilis (strain 168).